A 236-amino-acid chain; its full sequence is Protein YIPF6 (236 aa).

The residue at position 2 (Ala2) is an N-acetylalanine. The Cytoplasmic segment spans residues Ala2–Thr84. Ser7 carries the phosphoserine modification. Residues Leu85–Leu105 traverse the membrane as a helical segment. The Lumenal portion of the chain corresponds to Gln106 to Asp115. Residues Gly116–Leu136 traverse the membrane as a helical segment. The Cytoplasmic portion of the chain corresponds to Asn137–Ser146. A helical membrane pass occupies residues Phe147–Val167. The Lumenal portion of the chain corresponds to Cys168–Arg184. Residues Leu185–Asp205 form a helical membrane-spanning segment. Over Ser206 to Lys212 the chain is Cytoplasmic. The chain crosses the membrane as a helical span at residues Ala213–Phe233. At Thr234 to Gln236 the chain is on the lumenal side.

This sequence belongs to the YIP1 family. In terms of assembly, predominantly interacts with YIPF1 or YIPF2, but may also form a ternary complex with YIPF1 and YIPF2. This interaction may stabilize YIPF1 and YIPF2.

The protein localises to the golgi apparatus membrane. Its function is as follows. May be required for stable YIPF1 and YIPF2 protein expression. In Bos taurus (Bovine), this protein is Protein YIPF6 (YIPF6).